Consider the following 321-residue polypeptide: CRISPR system ring nuclease SSO1393 (321 aa).

Belongs to the cOA ring nuclease family. Homodimer. Does not require a metal cofactor. serves as cofactor.

The protein resides in the cytoplasm. The catalysed reaction is cyclic tetraadenylate = 2 5'-hydroxy-diadenylate 2',3'-cylic phosphate. Functionally, CRISPR (clustered regularly interspaced short palindromic repeat) is an adaptive immune system that provides protection against mobile genetic elements (viruses, transposable elements and conjugative plasmids). CRISPR clusters contain spacers, sequences complementary to antecedent mobile elements, and target invading nucleic acids. CRISPR clusters are transcribed and processed into CRISPR RNA (crRNA). A nuclease that degrades cyclic oligoadenylates (cOA), second messengers that induce an antiviral state important for defense against invading nucleic acids. Destruction of cOA deactivates the Csx1 ribonuclease, preventing uncontrolled degradation of cellular RNA. Slowly degrades cA4 (a tetraadenylate ring) into first a linear tetraadenylate product and secondly into a linear diadenylate product with 5'-OH and 2',3'-cyclic phosphate termini. Is 10-fold less active than SSO2081, suggesting it plays a minor role in cA4 degradation. There may be 2 active sites per homodimer. This chain is CRISPR system ring nuclease SSO1393, found in Saccharolobus solfataricus (strain ATCC 35092 / DSM 1617 / JCM 11322 / P2) (Sulfolobus solfataricus).